A 127-amino-acid chain; its full sequence is MSLQSNSVKPTEIPLSEIRRPLAPVLDPQKIDAMVATMKGIPTASKTCSLEQAEAAASAGELPPVDVLGVRVKGQTLYYAFGGCHRLQAYDRRARETQNAAFPVRCRVLPATPRQIRMYLGSSLDIE.

This sequence belongs to the sulfiredoxin family. It depends on Mg(2+) as a cofactor. Post-translationally, forms a transient disulfide bond with TSA1 during the reduction of cysteine sulfinic acid (-SO2H).

The protein localises to the cytoplasm. It is found in the nucleus. The enzyme catalyses S-hydroxy-S-oxy-L-cysteinyl-[peroxiredoxin] + [protein]-dithiol + ATP = S-hydroxy-L-cysteinyl-[peroxiredoxin] + [protein]-disulfide + ADP + phosphate. Its function is as follows. Contributes to oxidative stress resistance by reducing cysteine-sulfinic acid formed under exposure to oxidants in the peroxiredoxin TSA1. May catalyze the reduction in a multi-step process by acting both as a specific phosphotransferase and as thioltransferase. The chain is Sulfiredoxin from Saccharomyces cerevisiae (strain ATCC 204508 / S288c) (Baker's yeast).